The following is a 959-amino-acid chain: Lon protease homolog, mitochondrial (959 aa).

The transit peptide at 1-67 (MAASTGYVRL…GPAIGGQWRG (67 aa)) directs the protein to the mitochondrion. Disordered stretches follow at residues 77 to 102 (GAFSGGEDASEGGAEEGAGGAGGSAG) and 218 to 257 (RQLEVEPEEPEAENKHKPRRKSKRGKKEAEDELSARHPAE). Over residues 91 to 102 (EEGAGGAGGSAG) the composition is skewed to gly residues. The Lon N-terminal domain maps to 124-370 (LPLIAITRNP…KALSLLKKEF (247 aa)). Basic residues predominate over residues 233-243 (HKPRRKSKRGK). Positions 244 to 256 (KEAEDELSARHPA) are enriched in basic and acidic residues. Residue 523–530 (GPPGVGKT) coordinates ATP. Positions 759–949 (VTPPGVVMGL…REIFDIAFPD (191 aa)) constitute a Lon proteolytic domain. Active-site residues include S855 and K898.

The protein belongs to the peptidase S16 family. Homohexamer. Organized in a ring with a central cavity. The ATP-binding and proteolytic domains (AP-domain) form a hexameric chamber, while the N-terminal domain is arranged as a trimer of dimers. DNA and RNA binding is stimulated by substrate and inhibited by ATP binding. Interacts with TWNK and mitochondrial DNA polymerase subunit POLG. As to expression, duodenum, heart, lung and liver, but not thymus.

The protein localises to the mitochondrion matrix. It catalyses the reaction Hydrolysis of proteins in presence of ATP.. With respect to regulation, peptidase activity is subject to substrate inhibition by ATP. Functionally, ATP-dependent serine protease that mediates the selective degradation of misfolded, unassembled or oxidatively damaged polypeptides as well as certain short-lived regulatory proteins in the mitochondrial matrix. Endogenous substrates include mitochondrial steroidogenic acute regulatory (StAR) protein, DELE1, helicase Twinkle (TWNK) and the large ribosomal subunit protein MRPL32/bL32m. MRPL32/bL32m is protected from degradation by LONP1 when it is bound to a nucleic acid (RNA), but TWNK is not. May also have a chaperone function in the assembly of inner membrane protein complexes. Participates in the regulation of mitochondrial gene expression and in the maintenance of the integrity of the mitochondrial genome. Binds to mitochondrial promoters and RNA in a single-stranded, site-specific, and strand-specific manner. May regulate mitochondrial DNA replication and/or gene expression using site-specific, single-stranded DNA binding to target the degradation of regulatory proteins binding to adjacent sites in mitochondrial promoters. This is Lon protease homolog, mitochondrial from Homo sapiens (Human).